The primary structure comprises 389 residues: BTB/POZ domain-containing protein KCTD9 (389 aa).

The KHA domain occupies 3–82; the sequence is RVTLFLNGSP…PQTDSKPPEG (80 aa). Serine 11 carries the phosphoserine modification. A BTB domain is found at 89–161; the sequence is DWLTLNVGGR…LRHGQLIVND (73 aa). Pentapeptide repeat domains follow at residues 224-256, 258-297, and 338-376; these read NFSGADLSRLDLRYINFKMANLSRCNLAHANLC, ANLERADLSGSVLDCANLQGVKMLCSNAEGASLKLCNFED, and CNLRGATLAGTDLENCDLSGCDLQEANLRGSNVKGAIFE.

Forms pentamers. Component of a complex composed of 5 subunits of KCTD9 and 5 CUL3.

It participates in protein modification; protein ubiquitination. Functionally, substrate-specific adapter of a BCR (BTB-CUL3-RBX1) E3 ubiquitin-protein ligase complex, which mediates the ubiquitination of target proteins, leading to their degradation by the proteasome. The sequence is that of BTB/POZ domain-containing protein KCTD9 (KCTD9) from Homo sapiens (Human).